The sequence spans 337 residues: Ribosomal RNA small subunit methyltransferase H (337 aa).

S-adenosyl-L-methionine-binding positions include 33–35 (AGH), D53, D101, and Q108.

The protein belongs to the methyltransferase superfamily. RsmH family.

It localises to the cytoplasm. It carries out the reaction cytidine(1402) in 16S rRNA + S-adenosyl-L-methionine = N(4)-methylcytidine(1402) in 16S rRNA + S-adenosyl-L-homocysteine + H(+). Its function is as follows. Specifically methylates the N4 position of cytidine in position 1402 (C1402) of 16S rRNA. The polypeptide is Ribosomal RNA small subunit methyltransferase H (Herpetosiphon aurantiacus (strain ATCC 23779 / DSM 785 / 114-95)).